A 494-amino-acid polypeptide reads, in one-letter code: Probable malate:quinone oxidoreductase 3 (494 aa).

This sequence belongs to the MQO family. Requires FAD as cofactor.

It catalyses the reaction (S)-malate + a quinone = a quinol + oxaloacetate. The protein operates within carbohydrate metabolism; tricarboxylic acid cycle; oxaloacetate from (S)-malate (quinone route): step 1/1. The polypeptide is Probable malate:quinone oxidoreductase 3 (Staphylococcus epidermidis (strain ATCC 12228 / FDA PCI 1200)).